The sequence spans 58 residues: Metallothionein-1 (58 aa).

A beta region spans residues 1–28; it reads PGPCCKDKCECAEGGCKTGCKCTSCRCA. The a divalent metal cation site is built by cysteine 4, cysteine 5, cysteine 9, cysteine 11, cysteine 16, cysteine 20, cysteine 22, cysteine 25, cysteine 27, cysteine 30, cysteine 33, cysteine 37, cysteine 39, cysteine 45, cysteine 49, cysteine 53, cysteine 55, and cysteine 56. Positions 29–58 are alpha; sequence PCEKCTSGCKCPSKDECAKTCSKPCSCCXX.

Belongs to the metallothionein superfamily. Type 3 family.

Metallothioneins have a high content of cysteine residues that bind various heavy metals. The different forms of lobster metallothioneins may have different biological functions. Class I MTS in marine crustacea are involved in the sequestration of elevated levels of heavy-metal ions. Binds 6 metal ions. Known to bind cadmium. This is Metallothionein-1 from Homarus americanus (American lobster).